Reading from the N-terminus, the 337-residue chain is Ketol-acid reductoisomerase (NADP(+)) (337 aa).

The 180-residue stretch at 1–180 (MKIYYDTDVN…GGGRAGIIET (180 aa)) folds into the KARI N-terminal Rossmann domain. Residues 24–27 (YGSQ), Arg-47, Ser-51, and 81–84 (DELQ) contribute to the NADP(+) site. The active site involves His-106. Residue Gly-132 participates in NADP(+) binding. The KARI C-terminal knotted domain maps to 181–326 (TFKDETETDL…EKLRAMMPWL (146 aa)). Positions 189, 193, 225, and 229 each coordinate Mg(2+). Ser-250 is a binding site for substrate.

Belongs to the ketol-acid reductoisomerase family. Mg(2+) serves as cofactor.

It catalyses the reaction (2R)-2,3-dihydroxy-3-methylbutanoate + NADP(+) = (2S)-2-acetolactate + NADPH + H(+). The enzyme catalyses (2R,3R)-2,3-dihydroxy-3-methylpentanoate + NADP(+) = (S)-2-ethyl-2-hydroxy-3-oxobutanoate + NADPH + H(+). It functions in the pathway amino-acid biosynthesis; L-isoleucine biosynthesis; L-isoleucine from 2-oxobutanoate: step 2/4. The protein operates within amino-acid biosynthesis; L-valine biosynthesis; L-valine from pyruvate: step 2/4. Its function is as follows. Involved in the biosynthesis of branched-chain amino acids (BCAA). Catalyzes an alkyl-migration followed by a ketol-acid reduction of (S)-2-acetolactate (S2AL) to yield (R)-2,3-dihydroxy-isovalerate. In the isomerase reaction, S2AL is rearranged via a Mg-dependent methyl migration to produce 3-hydroxy-3-methyl-2-ketobutyrate (HMKB). In the reductase reaction, this 2-ketoacid undergoes a metal-dependent reduction by NADPH to yield (R)-2,3-dihydroxy-isovalerate. The chain is Ketol-acid reductoisomerase (NADP(+)) from Thermodesulfovibrio yellowstonii (strain ATCC 51303 / DSM 11347 / YP87).